Consider the following 445-residue polypeptide: Ubiquitin carboxyl-terminal hydrolase MINDY-3 (445 aa).

Cys51 serves as the catalytic Nucleophile. Ser125 is modified (phosphoserine). The active-site Proton acceptor is His287.

It belongs to the MINDY deubiquitinase family. FAM188 subfamily. Interacts with COPS5.

It is found in the nucleus. The enzyme catalyses Thiol-dependent hydrolysis of ester, thioester, amide, peptide and isopeptide bonds formed by the C-terminal Gly of ubiquitin (a 76-residue protein attached to proteins as an intracellular targeting signal).. Functionally, hydrolase that can remove 'Lys-48'-linked conjugated ubiquitin from proteins. This Bos taurus (Bovine) protein is Ubiquitin carboxyl-terminal hydrolase MINDY-3 (MINDY3).